A 730-amino-acid chain; its full sequence is Polyribonucleotide nucleotidyltransferase (730 aa).

Residues Asp489 and Asp495 each contribute to the Mg(2+) site. One can recognise a KH domain in the interval 556-615 (PKIDTIKVDVDKIKIVIGKGGETIDKIIEETGVKIDIDEDGNIAIYSSDQEAINRTKEII). The 69-residue stretch at 625 to 693 (GEIYEAEVVR…DKGRIDASMK (69 aa)) folds into the S1 motif domain. A disordered region spans residues 691–730 (SMKALLPRPPRSEKSNKEDHQSVRHHGSPKDDKGKEKYDK). The span at 700-730 (PRSEKSNKEDHQSVRHHGSPKDDKGKEKYDK) shows a compositional bias: basic and acidic residues.

The protein belongs to the polyribonucleotide nucleotidyltransferase family. Mg(2+) serves as cofactor.

The protein localises to the cytoplasm. The enzyme catalyses RNA(n+1) + phosphate = RNA(n) + a ribonucleoside 5'-diphosphate. Its function is as follows. Involved in mRNA degradation. Catalyzes the phosphorolysis of single-stranded polyribonucleotides processively in the 3'- to 5'-direction. The polypeptide is Polyribonucleotide nucleotidyltransferase (Streptococcus mutans serotype c (strain ATCC 700610 / UA159)).